We begin with the raw amino-acid sequence, 225 residues long: Uracil-DNA glycosylase (225 aa).

Catalysis depends on Asp-64, which acts as the Proton acceptor.

It belongs to the uracil-DNA glycosylase (UDG) superfamily. UNG family.

It is found in the cytoplasm. The enzyme catalyses Hydrolyzes single-stranded DNA or mismatched double-stranded DNA and polynucleotides, releasing free uracil.. Excises uracil residues from the DNA which can arise as a result of misincorporation of dUMP residues by DNA polymerase or due to deamination of cytosine. This is Uracil-DNA glycosylase from Lachnoclostridium phytofermentans (strain ATCC 700394 / DSM 18823 / ISDg) (Clostridium phytofermentans).